The following is a 102-amino-acid chain: Flagellar hook-basal body complex protein FliE (102 aa).

The protein belongs to the FliE family.

Its subcellular location is the bacterial flagellum basal body. In Oceanobacillus iheyensis (strain DSM 14371 / CIP 107618 / JCM 11309 / KCTC 3954 / HTE831), this protein is Flagellar hook-basal body complex protein FliE.